Consider the following 276-residue polypeptide: Dermonecrotic toxin LlSicTox-alphaIV2iv (276 aa).

His5 is an active-site residue. The Mg(2+) site is built by Glu25 and Asp27. The active-site Nucleophile is His41. Intrachain disulfides connect Cys45–Cys51 and Cys47–Cys193. Asp85 lines the Mg(2+) pocket.

This sequence belongs to the arthropod phospholipase D family. Class II subfamily. The cofactor is Mg(2+). Expressed by the venom gland.

It localises to the secreted. The enzyme catalyses an N-(acyl)-sphingosylphosphocholine = an N-(acyl)-sphingosyl-1,3-cyclic phosphate + choline. It catalyses the reaction an N-(acyl)-sphingosylphosphoethanolamine = an N-(acyl)-sphingosyl-1,3-cyclic phosphate + ethanolamine. The catalysed reaction is a 1-acyl-sn-glycero-3-phosphocholine = a 1-acyl-sn-glycero-2,3-cyclic phosphate + choline. It carries out the reaction a 1-acyl-sn-glycero-3-phosphoethanolamine = a 1-acyl-sn-glycero-2,3-cyclic phosphate + ethanolamine. Dermonecrotic toxins cleave the phosphodiester linkage between the phosphate and headgroup of certain phospholipids (sphingolipid and lysolipid substrates), forming an alcohol (often choline) and a cyclic phosphate. This toxin acts on sphingomyelin (SM). It may also act on ceramide phosphoethanolamine (CPE), lysophosphatidylcholine (LPC) and lysophosphatidylethanolamine (LPE), but not on lysophosphatidylserine (LPS), and lysophosphatidylglycerol (LPG). It acts by transphosphatidylation, releasing exclusively cyclic phosphate products as second products. Induces dermonecrosis, hemolysis, increased vascular permeability, edema, inflammatory response, and platelet aggregation. In Loxosceles laeta (South American recluse spider), this protein is Dermonecrotic toxin LlSicTox-alphaIV2iv.